A 158-amino-acid chain; its full sequence is Snaclec coagulation factor X-activating enzyme light chain 2 (158 aa).

The N-terminal stretch at 1–24 (MGRFISVSFGLLVVFLSLSGTGAG) is a signal peptide. 3 cysteine pairs are disulfide-bonded: C27-C38, C55-C152, and C127-C144. The region spanning 34–153 (YRYFCYRVFK…CEERYLFVCK (120 aa)) is the C-type lectin domain. N82 carries an N-linked (GlcNAc...) (complex) asparagine glycan.

Belongs to the snaclec family. Heterotrimer; disulfide-linked. The heterotrimer consists of 1 heavy chain (a metalloproteinase) and 2 light chains: LC1 and LC2. Post-translationally, N-glycosylated; probably required for conformation. Removal of easily accessible sugars does not change its functional capacity, but removal of the core sugars with N-glycanase causes a virtually complete loss of enzyme activity, apparently as a result of major conformational changes in the molecule. Not O-glycosylated. As to expression, expressed by the venom gland.

The protein resides in the secreted. Its function is as follows. Regulatory subunit of the blood coagulation factor X- and IX-activating enzyme. The enzyme activates coagulation factor X (F10) by cleaving the Arg-Ile bond and is also able to activate coagulation factor IX (F9) and protein S (PROS1) by specific cleavage of Arg-Ile and Arg-Val bonds. May serve as an exosite by which the enzyme recognizes and binds to the Gla domain of factor X (F10) and factor IX (F9) in a calcium-dependent manner. This chain is Snaclec coagulation factor X-activating enzyme light chain 2 (LC2), found in Daboia siamensis (Eastern Russel's viper).